We begin with the raw amino-acid sequence, 144 residues long: Large ribosomal subunit protein uL16 (144 aa).

It belongs to the universal ribosomal protein uL16 family. As to quaternary structure, part of the 50S ribosomal subunit.

Binds 23S rRNA and is also seen to make contacts with the A and possibly P site tRNAs. In Bacillus subtilis (strain 168), this protein is Large ribosomal subunit protein uL16.